A 443-amino-acid polypeptide reads, in one-letter code: Ribosomal protein uS12 methylthiotransferase RimO (443 aa).

The MTTase N-terminal domain maps to Met-1–Pro-114. [4Fe-4S] cluster is bound by residues Cys-8, Cys-44, Cys-73, Cys-145, Cys-149, and Cys-152. Positions Leu-131–Arg-372 constitute a Radical SAM core domain. Residues Gln-375 to Val-443 form the TRAM domain.

The protein belongs to the methylthiotransferase family. RimO subfamily. [4Fe-4S] cluster serves as cofactor.

The protein localises to the cytoplasm. It catalyses the reaction L-aspartate(89)-[ribosomal protein uS12]-hydrogen + (sulfur carrier)-SH + AH2 + 2 S-adenosyl-L-methionine = 3-methylsulfanyl-L-aspartate(89)-[ribosomal protein uS12]-hydrogen + (sulfur carrier)-H + 5'-deoxyadenosine + L-methionine + A + S-adenosyl-L-homocysteine + 2 H(+). Functionally, catalyzes the methylthiolation of an aspartic acid residue of ribosomal protein uS12. The chain is Ribosomal protein uS12 methylthiotransferase RimO from Cupriavidus necator (strain ATCC 17699 / DSM 428 / KCTC 22496 / NCIMB 10442 / H16 / Stanier 337) (Ralstonia eutropha).